We begin with the raw amino-acid sequence, 179 residues long: Large ribosomal subunit protein uL6 (179 aa).

It belongs to the universal ribosomal protein uL6 family. Part of the 50S ribosomal subunit.

Its function is as follows. This protein binds to the 23S rRNA, and is important in its secondary structure. It is located near the subunit interface in the base of the L7/L12 stalk, and near the tRNA binding site of the peptidyltransferase center. This is Large ribosomal subunit protein uL6 from Pseudomonas savastanoi pv. phaseolicola (strain 1448A / Race 6) (Pseudomonas syringae pv. phaseolicola (strain 1448A / Race 6)).